Here is a 157-residue protein sequence, read N- to C-terminus: Protein Smg (157 aa).

This sequence belongs to the Smg family.

This Serratia proteamaculans (strain 568) protein is Protein Smg.